Reading from the N-terminus, the 278-residue chain is Large ribosomal subunit protein uL2 (278 aa).

2 disordered regions span residues 27–57 (STPEKSLVRPLHSKGGRNNAGRVTVRHQGGG) and 224–278 (VAMN…NKKR). The span at 258–278 (RSPKKASSKYIVRRRKTNKKR) shows a compositional bias: basic residues.

It belongs to the universal ribosomal protein uL2 family. In terms of assembly, part of the 50S ribosomal subunit. Forms a bridge to the 30S subunit in the 70S ribosome.

Its function is as follows. One of the primary rRNA binding proteins. Required for association of the 30S and 50S subunits to form the 70S ribosome, for tRNA binding and peptide bond formation. It has been suggested to have peptidyltransferase activity; this is somewhat controversial. Makes several contacts with the 16S rRNA in the 70S ribosome. The protein is Large ribosomal subunit protein uL2 of Streptomyces avermitilis (strain ATCC 31267 / DSM 46492 / JCM 5070 / NBRC 14893 / NCIMB 12804 / NRRL 8165 / MA-4680).